Here is a 749-residue protein sequence, read N- to C-terminus: Catalase-peroxidase (749 aa).

Positions 98 to 234 (WHAAGTYRVQ…LAASHMGLIY (137 aa)) form a cross-link, tryptophyl-tyrosyl-methioninium (Trp-Tyr) (with M-260). Catalysis depends on His-99, which acts as the Proton acceptor. The segment at residues 234 to 260 (YVNPEGPNGEPDPVAAAHDIRTTFGRM) is a cross-link (tryptophyl-tyrosyl-methioninium (Tyr-Met) (with W-98)). Residue His-275 coordinates heme b.

This sequence belongs to the peroxidase family. Peroxidase/catalase subfamily. As to quaternary structure, homodimer or homotetramer. It depends on heme b as a cofactor. Formation of the three residue Trp-Tyr-Met cross-link is important for the catalase, but not the peroxidase activity of the enzyme.

Its subcellular location is the cytoplasm. The catalysed reaction is H2O2 + AH2 = A + 2 H2O. It carries out the reaction 2 H2O2 = O2 + 2 H2O. Bifunctional enzyme with both catalase and broad-spectrum peroxidase activity. The sequence is that of Catalase-peroxidase from Mycosarcoma maydis (Corn smut fungus).